Here is a 424-residue protein sequence, read N- to C-terminus: Serine--tRNA ligase (424 aa).

230–232 (TAE) contributes to the L-serine binding site. Residue 261-263 (RSE) participates in ATP binding. Residue E284 participates in L-serine binding. 348–351 (EISS) provides a ligand contact to ATP. S384 lines the L-serine pocket.

This sequence belongs to the class-II aminoacyl-tRNA synthetase family. Type-1 seryl-tRNA synthetase subfamily. Homodimer. The tRNA molecule binds across the dimer.

It is found in the cytoplasm. The enzyme catalyses tRNA(Ser) + L-serine + ATP = L-seryl-tRNA(Ser) + AMP + diphosphate + H(+). The catalysed reaction is tRNA(Sec) + L-serine + ATP = L-seryl-tRNA(Sec) + AMP + diphosphate + H(+). The protein operates within aminoacyl-tRNA biosynthesis; selenocysteinyl-tRNA(Sec) biosynthesis; L-seryl-tRNA(Sec) from L-serine and tRNA(Sec): step 1/1. Functionally, catalyzes the attachment of serine to tRNA(Ser). Is also able to aminoacylate tRNA(Sec) with serine, to form the misacylated tRNA L-seryl-tRNA(Sec), which will be further converted into selenocysteinyl-tRNA(Sec). This chain is Serine--tRNA ligase, found in Streptococcus pneumoniae serotype 2 (strain D39 / NCTC 7466).